A 727-amino-acid polypeptide reads, in one-letter code: Translation initiation factor IF-2, mitochondrial (727 aa).

Residues 1 to 29 (MNQKLLKLENLLRFHTIYRQLHSLCQRRA) constitute a mitochondrion transit peptide. A tr-type G domain is found at 178–348 (PRSPVVTIMG…VALAEMLELK (171 aa)). The segment at 187 to 194 (GHVDHGKT) is G1. 187–194 (GHVDHGKT) is a binding site for GTP. Residues 212–216 (GITQH) are G2. Residues 234–237 (DTPG) and 288–291 (NKCD) contribute to the GTP site. The segment at 234-237 (DTPG) is G3. A G4 region spans residues 288–291 (NKCD). The interval 324-326 (SAL) is G5. Residue Thr-688 is modified to Phosphothreonine.

The protein belongs to the TRAFAC class translation factor GTPase superfamily. Classic translation factor GTPase family. IF-2 subfamily. Monomer. In terms of tissue distribution, expressed in all tissues examined. Highest level in skeletal muscle.

It localises to the mitochondrion. Functionally, one of the essential components for the initiation of protein synthesis. Protects formylmethionyl-tRNA from spontaneous hydrolysis and promotes its binding to the 30S ribosomal subunits. Also involved in the hydrolysis of GTP during the formation of the 70S ribosomal complex. The protein is Translation initiation factor IF-2, mitochondrial (MTIF2) of Homo sapiens (Human).